The following is a 210-amino-acid chain: Glutathione S-transferase 2 (210 aa).

One can recognise a GST N-terminal domain in the interval 1-80; sequence MDFYYLPLSA…YLVEKYGKQN (80 aa). Glutathione is bound by residues Ser9, 50 to 52, and 64 to 66; these read HTI and ESR. Residues 87-208 form the GST C-terminal domain; it reads CPKKRALINQ…AGCLEMKKYF (122 aa).

Belongs to the GST superfamily. Theta family. Homodimer.

It catalyses the reaction RX + glutathione = an S-substituted glutathione + a halide anion + H(+). In terms of biological role, conjugation of reduced glutathione to a wide number of exogenous and endogenous hydrophobic electrophiles. The protein is Glutathione S-transferase 2 (Gst2) of Musca domestica (House fly).